The sequence spans 45 residues: Enterotoxin (45 aa).

As to quaternary structure, one of 3 components (of 35, 45 and 105 kDa) of the enterotoxin.

One of 3 components required for cytotoxicity (tested in African green monkey Vero cells); the complex is not hemolytic. The protein is Enterotoxin of Bacillus cereus.